A 305-amino-acid chain; its full sequence is Superkiller complex protein 8 (305 aa).

N-acetylmethionine is present on methionine 1. Threonine 2 carries the N-acetylthreonine; in WD repeat-containing protein 61, N-terminally processed modification. WD repeat units lie at residues 14–57 (AHDD…LELQ), 62–101 (GHQLGVVSVDISHTLPIAASSSLDAHIRLWDLENGKQMKS), 104–143 (AGPVDAWTLAFSPDSQHLATGTHMGKVNIFGVESGKKEYS), 146–187 (TRGK…HTLE), 188–227 (GHAMPIRSLTFSPDSQLLVTASDDGYIKIYDVQHANLAGT), 230–269 (GHASWVLNVAFCPDDTHFVSSSSDKSVKVWDVGTRTCIHT), and 272–305 (DHQDQVWGVKYNGNGSKIVSVGDDQEIHVYDCPI).

The protein belongs to the SKI8 family. In terms of assembly, component of the PAF1 complex, which consists of CDC73, PAF1, LEO1, CTR9, RTF1 and SKIC8. The PAF1 complex interacts with PHF5A. Within the PAF1 complex interacts directly with PHF5A. Component of the SKI complex which consists of SKIC2, SKIC3 and SKIC8.

Its subcellular location is the nucleus. It is found in the cytoplasm. Component of the PAF1 complex (PAF1C) which has multiple functions during transcription by RNA polymerase II and is implicated in regulation of development and maintenance of embryonic stem cell pluripotency. PAF1C associates with RNA polymerase II through interaction with POLR2A CTD non-phosphorylated and 'Ser-2'- and 'Ser-5'-phosphorylated forms and is involved in transcriptional elongation, acting both independently and synergistically with TCEA1 and in cooperation with the DSIF complex and HTATSF1. PAF1C is required for transcription of Hox and Wnt target genes. PAF1C is involved in hematopoiesis and stimulates transcriptional activity of KMT2A/MLL1; it promotes leukemogenesis through association with KMT2A/MLL1-rearranged oncoproteins, such as KMT2A/MLL1-MLLT3/AF9 and KMT2A/MLL1-MLLT1/ENL. PAF1C is involved in histone modifications such as ubiquitination of histone H2B and methylation on histone H3 'Lys-4' (H3K4me3). PAF1C recruits the RNF20/40 E3 ubiquitin-protein ligase complex and the E2 enzyme UBE2A or UBE2B to chromatin which mediate monoubiquitination of 'Lys-120' of histone H2B (H2BK120ub1); UB2A/B-mediated H2B ubiquitination is proposed to be coupled to transcription. PAF1C is involved in mRNA 3' end formation probably through association with cleavage and poly(A) factors. In case of infection by influenza A strain H3N2, PAF1C associates with viral NS1 protein, thereby regulating gene transcription. Required for mono- and trimethylation on histone H3 'Lys-4' (H3K4me3), dimethylation on histone H3 'Lys-79' (H3K4me3). Required for Hox gene transcription. Also acts as a component of the SKI complex, a multiprotein complex that assists the RNA-degrading exosome during the mRNA decay and quality-control pathways. The SKI complex catalyzes mRNA extraction from 80S ribosomal complexes in the 3'-5' direction and channels mRNA to the cytosolic exosome for degradation. SKI-mediated extraction of mRNA from stalled ribosomes allow binding of the Pelota-HBS1L complex and subsequent ribosome disassembly by ABCE1 for ribosome recycling. This is Superkiller complex protein 8 (Skic8) from Rattus norvegicus (Rat).